The chain runs to 192 residues: dTDP-4-amino-4,6-dideoxy-D-glucose acyltransferase (192 aa).

It belongs to the transferase hexapeptide repeat family.

The catalysed reaction is dTDP-4-amino-4,6-dideoxy-alpha-D-glucose + acetyl-CoA = dTDP-4-acetamido-4,6-dideoxy-alpha-D-glucose + CoA + H(+). It participates in bacterial outer membrane biogenesis; lipopolysaccharide biosynthesis. Functionally, catalyzes the conversion of dTDP-4-amino-4,6-dideoxy-D-glucose (dTDP-D-Qui4N) to dTDP-4-acetamido-4,6-dideoxy-D-glucose (dTDP-D-Qui4NAc). This is dTDP-4-amino-4,6-dideoxy-D-glucose acyltransferase (vioB) from Escherichia coli.